The following is a 60-amino-acid chain: Large ribosomal subunit protein uL30 (60 aa).

It belongs to the universal ribosomal protein uL30 family. Part of the 50S ribosomal subunit.

This Dehalococcoides mccartyi (strain ATCC BAA-2266 / KCTC 15142 / 195) (Dehalococcoides ethenogenes (strain 195)) protein is Large ribosomal subunit protein uL30.